The sequence spans 159 residues: D-aminoacyl-tRNA deacylase (159 aa).

A Gly-cisPro motif, important for rejection of L-amino acids motif is present at residues 146–147 (GP).

Belongs to the DTD family. Homodimer.

Its subcellular location is the cytoplasm. It carries out the reaction glycyl-tRNA(Ala) + H2O = tRNA(Ala) + glycine + H(+). The catalysed reaction is a D-aminoacyl-tRNA + H2O = a tRNA + a D-alpha-amino acid + H(+). In terms of biological role, an aminoacyl-tRNA editing enzyme that deacylates mischarged D-aminoacyl-tRNAs. Also deacylates mischarged glycyl-tRNA(Ala), protecting cells against glycine mischarging by AlaRS. Acts via tRNA-based rather than protein-based catalysis; rejects L-amino acids rather than detecting D-amino acids in the active site. By recycling D-aminoacyl-tRNA to D-amino acids and free tRNA molecules, this enzyme counteracts the toxicity associated with the formation of D-aminoacyl-tRNA entities in vivo and helps enforce protein L-homochirality. This is D-aminoacyl-tRNA deacylase from Bifidobacterium adolescentis (strain ATCC 15703 / DSM 20083 / NCTC 11814 / E194a).